A 459-amino-acid chain; its full sequence is ATP synthase subunit beta (459 aa).

149–156 (GGAGVGKT) is an ATP binding site.

Belongs to the ATPase alpha/beta chains family. F-type ATPases have 2 components, CF(1) - the catalytic core - and CF(0) - the membrane proton channel. CF(1) has five subunits: alpha(3), beta(3), gamma(1), delta(1), epsilon(1). CF(0) has three main subunits: a(1), b(2) and c(9-12). The alpha and beta chains form an alternating ring which encloses part of the gamma chain. CF(1) is attached to CF(0) by a central stalk formed by the gamma and epsilon chains, while a peripheral stalk is formed by the delta and b chains.

The protein resides in the cell inner membrane. The catalysed reaction is ATP + H2O + 4 H(+)(in) = ADP + phosphate + 5 H(+)(out). Produces ATP from ADP in the presence of a proton gradient across the membrane. The catalytic sites are hosted primarily by the beta subunits. This is ATP synthase subunit beta from Pseudomonas syringae pv. syringae (strain B728a).